The following is a 299-amino-acid chain: Trans-aconitate 3-methyltransferase (299 aa).

Position 2 is an N-acetylserine (Ser2).

The protein belongs to the methyltransferase superfamily. Tam family.

The protein resides in the cytoplasm. It catalyses the reaction trans-aconitate + S-adenosyl-L-methionine = (E)-2-(methoxycarbonylmethyl)but-2-enedioate + S-adenosyl-L-homocysteine. Catalyzes the S-adenosylmethionine monomethyl esterification of trans-aconitate and 3-isopropylmalate at high affinity and of other molecules like cis-aconitate, isocitrate, and citrate at lower velocities and affinities. The function of trans-aconitate methylation appears to be in reducing the toxicity of this spontaneous breakdown product of cis-aconitate. The role of 3-isopropylmalate methylation is unclear but may represent a metabolic branch at 3-isopropylmalate, where some of the material is taken in the pathway leading to leucine and some is taken in a pathway to the 3-isopropylmalate methyl ester, a molecule that provides a signal to switch from vegetative to invasive growth in response to amino acid starvation. The protein is Trans-aconitate 3-methyltransferase (TMT1) of Saccharomyces cerevisiae (strain YJM789) (Baker's yeast).